The primary structure comprises 224 residues: Virulence transcriptional regulatory protein PhoP (224 aa).

In terms of domain architecture, Response regulatory spans 3-117 (RVLVVEDNAL…EVMARMQALM (115 aa)). Residue D52 is modified to 4-aspartylphosphate. The ompR/PhoB-type DNA-binding region spans 125–223 (SQVINIPPFQ…VRGQGYLFEL (99 aa)).

In terms of assembly, monomer in the inactive, unphosphorylated state and dimer in the active, phosphorylated state. Post-translationally, phosphorylated by PhoQ.

The protein resides in the cytoplasm. Member of the two-component regulatory system PhoP/PhoQ which regulates the expression of genes involved in virulence, adaptation to acidic and low Mg(2+) environments and resistance to host defense antimicrobial peptides. Essential for intramacrophage survival of S.typhimurium. In low periplasmic Mg(2+), PhoQ phosphorylates PhoP, resulting in the expression of PhoP-activated genes (PAG) and repression of PhoP-repressed genes (PRG). In high periplasmic Mg(2+), PhoQ dephosphorylates phospho-PhoP, resulting in the repression of PAG and may lead to expression of some PRG. Essential for transcription of spiC inside macrophages by controlling the expression of the two-component regulatory system SsrB/SpiR (SsrA) and Pir at transcriptional and post-transcriptional levels respectively. Promotes expression of the two-component regulatory system PmrA/PmrB via activation of pmrD gene. Is required to attenuate bacterial growth within fibroblast cells and to enhance bacterial resistance to bile in intestinal cells. Negatively regulates prgH, which is required for invasion of epithelial cells. PhoP uses multiple mechanisms to promote transcription and activates promoters for PAG at low (uM range) Mg(2+) concentrations. Involved in acid tolerance. In Salmonella typhimurium (strain SL1344), this protein is Virulence transcriptional regulatory protein PhoP (phoP).